Consider the following 469-residue polypeptide: Programmed cell death protein 4 (469 aa).

An N-acetylmethionine modification is found at Met1. 2 disordered regions span residues 1-38 and 58-128; these read MDVENEQILNVNPADPDNLSDSLFSGDEESAGTEEIKN and KAKR…GTPG. At Ser25 the chain carries Phosphoserine. The Nuclear localization signal motif lies at 58-64; that stretch reads KAKRRLR. Ser67 is modified (phosphoserine; by PKB and RPS6KB1). Phosphoserine occurs at positions 68, 71, 76, and 78. The Phosphodegron signature appears at 70–76; that stretch reads DSGRGDS. Low complexity predominate over residues 74 to 83; that stretch reads GDSVSDNGSD. Polar residues predominate over residues 84–93; it reads TLRSGVTVPT. Ser94 is modified (phosphoserine). Over residues 114 to 125 the composition is skewed to gly residues; sequence KKGGAGGKGVWG. Tyr152 carries the post-translational modification Phosphotyrosine. One can recognise an MI 1 domain in the interval 163-284; it reads AFEKTLTPII…CNTYIDSYKG (122 aa). Residues Ser313 and Ser317 each carry the phosphoserine modification. The MI 2 domain maps to 326 to 449; sequence HLVKEIDMLL…SKQLRDLCPS (124 aa). The Nuclear localization signal motif lies at 448 to 454; it reads PSRGRKR. The residue at position 457 (Ser457) is a Phosphoserine; by PKB.

This sequence belongs to the PDCD4 family. Interacts (via MI domains) with EIF4A2. Interacts (via MI domains) with EIF4A1 (via N-terminal domain). Heterotrimer with EIF4A1; one molecule of PDCD4 binds two molecules of EIF4A1. Interacts with EIF4G1. May form a complex with EIF4A1 and EIF4G1. The interaction between PDCD4 and EIF4A1 interferes with the interaction between EIF4A1 and EIF4G. When phosphorylated, interacts with BTRC and FBXW11. Polyubiquitinated, leading to its proteasomal degradation. Rapidly degraded in response to mitogens. Phosphorylation of the phosphodegron promotes interaction with BTRC and proteasomal degradation. In terms of processing, phosphorylated at Ser-67 by RPS6KB1 in response to mitogens; phosphorylation promotes proteasomal degradation of PDCD4.

The protein resides in the nucleus. Its subcellular location is the cytoplasm. Its function is as follows. Inhibits translation initiation and cap-dependent translation. May excert its function by hindering the interaction between EIF4A1 and EIF4G. Inhibits the helicase activity of EIF4A. Modulates the activation of JUN kinase. Down-regulates the expression of MAP4K1, thus inhibiting events important in driving invasion, namely, MAPK85 activation and consequent JUN-dependent transcription. May play a role in apoptosis. Tumor suppressor. Inhibits tumor promoter-induced neoplastic transformation. Binds RNA. This chain is Programmed cell death protein 4 (PDCD4), found in Pongo abelii (Sumatran orangutan).